A 370-amino-acid polypeptide reads, in one-letter code: uncharacterized protein (370 aa).

Residues 62–293 (ATVALVGFPS…LKERMWRALG (232 aa)) enclose the OBG-type G domain. GTP contacts are provided by residues 68-75 (GFPSVGKS), 114-118 (DVPGL), and 243-246 (NKVD). The TGS domain occupies 293 to 368 (GLIRIYMDKP…EDEDVLRVVA (76 aa)).

It belongs to the TRAFAC class OBG-HflX-like GTPase superfamily. OBG GTPase family.

This is an uncharacterized protein from Halobacterium salinarum (strain ATCC 700922 / JCM 11081 / NRC-1) (Halobacterium halobium).